The primary structure comprises 305 residues: Olfactory receptor 4F4 (305 aa).

Over 1–18 the chain is Extracellular; it reads MVTEFIFLGLSDSQELQT. A helical membrane pass occupies residues 19–42; the sequence is FLFMLFFVFYGGIVFGNLLIVITV. The Cytoplasmic segment spans residues 43–50; that stretch reads VSDSHLHS. Residues 51–72 traverse the membrane as a helical segment; it reads PMYFLLANLSLIDLSLSSVTAP. The Extracellular portion of the chain corresponds to 73-93; sequence KMITDFFSQRKVISFKGCLVQ. A disulfide bridge links Cys90 with Cys182. Residues 94–113 traverse the membrane as a helical segment; the sequence is IFLLHFFGGSEMVILIAMGF. The Cytoplasmic portion of the chain corresponds to 114–132; sequence DRYIAICKPLHYTTIMCGN. Residues 133–151 traverse the membrane as a helical segment; it reads ACVGIMAVAWGIGFLHSVS. The Extracellular segment spans residues 152–188; sequence QLAFAVHLPFCGPNEVDSFYCDLPRVIKLACTDTYRL. The chain crosses the membrane as a helical span at residues 189 to 212; it reads DIMVIANSGVLTVCSFVLLIISYT. Over 213–228 the chain is Cytoplasmic; that stretch reads IILMTIQHCPLDKSSK. Residues 229-251 traverse the membrane as a helical segment; that stretch reads ALSTLTAHITVVLLFFGPCVFIY. Residues 252–262 lie on the Extracellular side of the membrane; it reads AWPFPIKSLDK. Residues 263–282 traverse the membrane as a helical segment; it reads FLAVFYSVITPLLNPIIYTL. Over 283–305 the chain is Cytoplasmic; the sequence is RNKDMKTAIRRLRKWDAHSSVKF.

This sequence belongs to the G-protein coupled receptor 1 family.

Its subcellular location is the cell membrane. Functionally, odorant receptor. This is Olfactory receptor 4F4 (OR4F4) from Homo sapiens (Human).